Reading from the N-terminus, the 605-residue chain is Putative zinc finger CCCH domain-containing protein 57 (605 aa).

Disordered regions lie at residues 198 to 218 (RHTG…GREV), 238 to 261 (LLQD…DGEV), and 375 to 403 (QASH…YQQP). Composition is skewed to basic and acidic residues over residues 201–218 (GHES…GREV) and 238–250 (LLQD…RADA). Over residues 389-403 (FPFQQQPQHDGYQQP) the composition is skewed to low complexity. 2 C3H1-type zinc fingers span residues 519–547 (EPKT…HSQD) and 557–585 (KYRT…QHRL).

This Oryza sativa subsp. japonica (Rice) protein is Putative zinc finger CCCH domain-containing protein 57.